The following is a 163-amino-acid chain: Ribonuclease P protein component (163 aa).

The interval 1-68 (MDEKDVATQP…GGKLLSLKGD (68 aa)) is disordered. Positions 8-19 (TQPQETGQNPRL) are enriched in polar residues.

This sequence belongs to the RnpA family. In terms of assembly, consists of a catalytic RNA component (M1 or rnpB) and a protein subunit.

It catalyses the reaction Endonucleolytic cleavage of RNA, removing 5'-extranucleotides from tRNA precursor.. Its function is as follows. RNaseP catalyzes the removal of the 5'-leader sequence from pre-tRNA to produce the mature 5'-terminus. It can also cleave other RNA substrates such as 4.5S RNA. The protein component plays an auxiliary but essential role in vivo by binding to the 5'-leader sequence and broadening the substrate specificity of the ribozyme. This is Ribonuclease P protein component from Thermus thermophilus (strain ATCC BAA-163 / DSM 7039 / HB27).